The primary structure comprises 123 residues: Small ribosomal subunit protein uS12cz/uS12cy (123 aa).

This sequence belongs to the universal ribosomal protein uS12 family. In terms of assembly, part of the 30S ribosomal subunit.

It is found in the plastid. The protein localises to the chloroplast. Its function is as follows. With S4 and S5 plays an important role in translational accuracy. Located at the interface of the 30S and 50S subunits. The sequence is that of Small ribosomal subunit protein uS12cz/uS12cy (rps12-A) from Platanus occidentalis (Sycamore).